Consider the following 77-residue polypeptide: Sec-independent protein translocase protein TatA (77 aa).

Residues 1–21 form a helical membrane-spanning segment; it reads MGSLSIWHWILVIAVVLLLFG. Residues 42-60 are compositionally biased toward basic and acidic residues; that stretch reads GMQDDDKPADKPEPAKSIE. The interval 42-77 is disordered; sequence GMQDDDKPADKPEPAKSIEHNAAPTAARSDVGSKAV.

It belongs to the TatA/E family. The Tat system comprises two distinct complexes: a TatABC complex, containing multiple copies of TatA, TatB and TatC subunits, and a separate TatA complex, containing only TatA subunits. Substrates initially bind to the TatABC complex, which probably triggers association of the separate TatA complex to form the active translocon.

The protein resides in the cell inner membrane. Part of the twin-arginine translocation (Tat) system that transports large folded proteins containing a characteristic twin-arginine motif in their signal peptide across membranes. TatA could form the protein-conducting channel of the Tat system. This Bradyrhizobium diazoefficiens (strain JCM 10833 / BCRC 13528 / IAM 13628 / NBRC 14792 / USDA 110) protein is Sec-independent protein translocase protein TatA.